The primary structure comprises 37 residues: Trypsin inhibitor 3 (37 aa).

3 cysteine pairs are disulfide-bonded: Cys-4-Cys-21, Cys-11-Cys-25, and Cys-20-Cys-36.

Trypsin inhibitor. The chain is Trypsin inhibitor 3 from Spinacia oleracea (Spinach).